A 1194-amino-acid chain; its full sequence is Phosphatidylinositol-3,5-bisphosphate 3-phosphatase MTMR3 (1194 aa).

Residue S4 is modified to Phosphoserine. In terms of domain architecture, Myotubularin phosphatase spans 151–572 (EHVTSRFKNE…RNLMLWSAVY (422 aa)). N322, N347, and I348 together coordinate a 1,2-diacyl-sn-glycero-3-phospho-(1D-myo-inositol-3,5-bisphosphate). The a 1,2-diacyl-sn-glycero-3-phospho-(1D-myo-inositol-3-phosphate) site is built by N322, N347, and I348. The Phosphocysteine intermediate role is filled by C409. 8 residues coordinate a 1,2-diacyl-sn-glycero-3-phospho-(1D-myo-inositol-3,5-bisphosphate): S410, D411, G412, W413, D414, R415, K451, and R455. Residues S410, D411, G412, W413, D414, and R415 each contribute to the a 1,2-diacyl-sn-glycero-3-phospho-(1D-myo-inositol-3-phosphate) site. R455 provides a ligand contact to a 1,2-diacyl-sn-glycero-3-phospho-(1D-myo-inositol-3-phosphate). The interval 583-609 (DDSCAPYPAPGTSPDEPPLSRLPKTRS) is disordered. Over residues 589-599 (YPAPGTSPDEP) the composition is skewed to pro residues. A phosphoserine mark is found at S609, S629, S643, and S647. Residues 693-724 (TKEESGVEEPTHREHTEVPEVKEEAPLAKESR) show a composition bias toward basic and acidic residues. Disordered stretches follow at residues 693–731 (TKEESGVEEPTHREHTEVPEVKEEAPLAKESRTAAQGSG), 852–871 (ESGPQLHHRPCLASSGRFSG), and 876–897 (PIAPEPRSAERPQWDSVLHRTS). Position 725 is a phosphothreonine (T725). Position 904 is a phosphoserine (S904). 2 disordered regions span residues 932–971 (NKASEQPAGFDTLQKYPTPNGHCANGETGRSKDSLSHQLS) and 988–1017 (KWLNSHSGRPSTTNSPEQPSRSHLDDDGMP). Polar residues predominate over residues 991–1006 (NSHSGRPSTTNSPEQP). Residues 1025-1058 (QRLRQIESGHQQEVETLKKQVQELKSRLESQYLT) adopt a coiled-coil conformation. S1060 is modified (phosphoserine). An FYVE-type zinc finger spans residues 1115 to 1175 (DHLAAHCYAC…VCKSCYSSLH (61 aa)). Residues C1121, C1124, C1137, C1140, C1145, C1148, C1167, and C1170 each contribute to the Zn(2+) site.

It belongs to the protein-tyrosine phosphatase family. Non-receptor class myotubularin subfamily. As to quaternary structure, forms heterodimers with MTMR4 that recruit both CEP55 and PLK1; occurs during early mitosis, regulates the phosphorylation of CEP55 by PLK1 and its recruitment to the midbody where it mediates cell abscission.

The protein localises to the cytoplasm. The protein resides in the cytosol. It localises to the membrane. The catalysed reaction is a 1,2-diacyl-sn-glycero-3-phospho-(1D-myo-inositol-3,5-bisphosphate) + H2O = a 1,2-diacyl-sn-glycero-3-phospho-(1D-myo-inositol-5-phosphate) + phosphate. It catalyses the reaction a 1,2-diacyl-sn-glycero-3-phospho-(1D-myo-inositol-3-phosphate) + H2O = a 1,2-diacyl-sn-glycero-3-phospho-(1D-myo-inositol) + phosphate. The enzyme catalyses 1,2-dihexadecanoyl-sn-glycero-3-phospho-(1D-myo-inositol-3-phosphate) + H2O = 1,2-dihexadecanoyl-sn-glycero-3-phospho-(1D-myo-inositol) + phosphate. It carries out the reaction 1,2-dioctanoyl-sn-glycero-3-phospho-(1-D-myo-inositol-3-phosphate) + H2O = 1,2-dioctanoyl-sn-glycero-3-phospho-(1D-myo-inositol) + phosphate. The catalysed reaction is 1,2-dihexadecanoyl-sn-glycero-3-phospho-(1D-myo-inositol-3,5-phosphate) + H2O = 1,2-dihexadecanoyl-sn-glycero-3-phospho-(1D-myo-inositol-5-phosphate) + phosphate. Functionally, lipid phosphatase that specifically dephosphorylates the D-3 position of phosphatidylinositol 3-phosphate and phosphatidylinositol 3,5-bisphosphate, generating phosphatidylinositol and phosphatidylinositol 5-phosphate. Decreases the levels of phosphatidylinositol 3-phosphate, a phospholipid found in cell membranes where it acts as key regulator of both cell signaling and intracellular membrane traffic. Could also have a molecular sequestering/adapter activity and regulate biological processes independently of its phosphatase activity. It includes the regulation of midbody abscission during mitotic cytokinesis. This is Phosphatidylinositol-3,5-bisphosphate 3-phosphatase MTMR3 from Rattus norvegicus (Rat).